A 360-amino-acid chain; its full sequence is MTTTLQQRGSASLWEKFCQWITSTENRIYVGWFGVLMIPTLLTATTCFIIAFIAAPPVDIDGIREPVAGSLLYGNNIVSGAVVPSSNAIGLHFYPIWEAASLDEWLYNGGPYQLVIFHFLIGVFCYMGREWELSYRLGMRPWICVAFSAPVAAATAVFLIYPIGQGSFSDGMPLGISGTFNFMIVFQAEHNILMHPFHMLGVAGVFGGSLFSAMHGSLVTSSLVRETTETESQNYGYKFGQEEETYNIVAAHGYFGRLIFQYASFNNSRSLHFFLGAWPVVGIWFTALGVSTMAFNLNGFNFNQSILDSQGRVINTWADILNRANLGFEVMHERNAHNFPLDLAAGEQAPVALQAPAING.

The next 3 membrane-spanning stretches (helical) occupy residues 29–46 (YVGW…TATT), 118–133 (HFLI…EWEL), and 142–156 (WICV…AATA). Histidine 118 contributes to the chlorophyll a binding site. Residue tyrosine 126 coordinates pheophytin a. [CaMn4O5] cluster contacts are provided by aspartate 170 and glutamate 189. The chain crosses the membrane as a helical span at residues 197–218 (FHMLGVAGVFGGSLFSAMHGSL). Histidine 198 contributes to the chlorophyll a binding site. Residues histidine 215 and 264 to 265 (SF) each bind a quinone. Histidine 215 serves as a coordination point for Fe cation. A Fe cation-binding site is contributed by histidine 272. A helical transmembrane segment spans residues 274-288 (FLGAWPVVGIWFTAL). [CaMn4O5] cluster-binding residues include histidine 332, glutamate 333, aspartate 342, and alanine 344. Positions 345 to 360 (AGEQAPVALQAPAING) are excised as a propeptide.

This sequence belongs to the reaction center PufL/M/PsbA/D family. In terms of assembly, PSII is composed of 1 copy each of membrane proteins PsbA, PsbB, PsbC, PsbD, PsbE, PsbF, PsbH, PsbI, PsbJ, PsbK, PsbL, PsbM, PsbT, PsbX, PsbY, PsbZ, Psb30/Ycf12, peripheral proteins PsbO, CyanoQ (PsbQ), PsbU, PsbV and a large number of cofactors. It forms dimeric complexes. The D1/D2 heterodimer binds P680, chlorophylls that are the primary electron donor of PSII, and subsequent electron acceptors. It shares a non-heme iron and each subunit binds pheophytin, quinone, additional chlorophylls, carotenoids and lipids. D1 provides most of the ligands for the Mn4-Ca-O5 cluster of the oxygen-evolving complex (OEC). There is also a Cl(-1) ion associated with D1 and D2, which is required for oxygen evolution. The PSII complex binds additional chlorophylls, carotenoids and specific lipids. is required as a cofactor. In terms of processing, tyr-161 forms a radical intermediate that is referred to as redox-active TyrZ, YZ or Y-Z. Post-translationally, C-terminally processed by CtpA; processing is essential to allow assembly of the oxygen-evolving complex and thus photosynthetic growth.

Its subcellular location is the cellular thylakoid membrane. It carries out the reaction 2 a plastoquinone + 4 hnu + 2 H2O = 2 a plastoquinol + O2. Its function is as follows. Photosystem II (PSII) is a light-driven water:plastoquinone oxidoreductase that uses light energy to abstract electrons from H(2)O, generating O(2) and a proton gradient subsequently used for ATP formation. It consists of a core antenna complex that captures photons, and an electron transfer chain that converts photonic excitation into a charge separation. The D1/D2 (PsbA/PsbD) reaction center heterodimer binds P680, the primary electron donor of PSII as well as several subsequent electron acceptors. This chain is Photosystem II protein D1 2, found in Picosynechococcus sp. (strain ATCC 27264 / PCC 7002 / PR-6) (Agmenellum quadruplicatum).